We begin with the raw amino-acid sequence, 281 residues long: Probable endonuclease 4 (281 aa).

Zn(2+) contacts are provided by H69, H109, E145, D179, H182, H216, D229, H231, and E261.

The protein belongs to the AP endonuclease 2 family. The cofactor is Zn(2+).

The catalysed reaction is Endonucleolytic cleavage to 5'-phosphooligonucleotide end-products.. Endonuclease IV plays a role in DNA repair. It cleaves phosphodiester bonds at apurinic or apyrimidinic (AP) sites, generating a 3'-hydroxyl group and a 5'-terminal sugar phosphate. The protein is Probable endonuclease 4 of Parabacteroides distasonis (strain ATCC 8503 / DSM 20701 / CIP 104284 / JCM 5825 / NCTC 11152).